Reading from the N-terminus, the 101-residue chain is Guanyl-specific ribonuclease Po1 (101 aa).

The residue at position 1 (Gln-1) is a Pyrrolidone carboxylic acid. Cystine bridges form between Cys-7/Cys-84, Cys-9/Cys-99, and Cys-48/Cys-82. The active site involves His-36. The active-site Proton acceptor is the Glu-54. His-87 acts as the Proton donor in catalysis.

It belongs to the ribonuclease N1/T1 family.

The enzyme catalyses [RNA] containing guanosine + H2O = an [RNA fragment]-3'-guanosine-3'-phosphate + a 5'-hydroxy-ribonucleotide-3'-[RNA fragment].. Inhibited by divalent cations. Inhibition decreases in the order zinc, lead, cadmium, nickel, mercury. This Pleurotus ostreatus (Oyster mushroom) protein is Guanyl-specific ribonuclease Po1.